We begin with the raw amino-acid sequence, 389 residues long: Brix domain-containing protein C1B9.03c (389 aa).

The Brix domain maps to 28–309 (SMVIRSGASE…LIKITEDAMG (282 aa)). Over residues 323–350 (EEIKQQDNFHEQSRALKEKRKKEQDENV) the composition is skewed to basic and acidic residues. Residues 323 to 389 (EEIKQQDNFH…EGSSAYSDTE (67 aa)) form a disordered region. Residues 351–362 (RRKRENKKRRKD) show a composition bias toward basic residues. Position 377 is a phosphoserine (Ser-377). Over residues 379 to 389 (NEGSSAYSDTE) the composition is skewed to polar residues.

The chain is Brix domain-containing protein C1B9.03c from Schizosaccharomyces pombe (strain 972 / ATCC 24843) (Fission yeast).